Here is a 313-residue protein sequence, read N- to C-terminus: Probable cell division protein WhiA (313 aa).

Positions Ser280–Gln313 form a DNA-binding region, H-T-H motif.

The protein belongs to the WhiA family.

Involved in cell division and chromosome segregation. The protein is Probable cell division protein WhiA of Lachnoclostridium phytofermentans (strain ATCC 700394 / DSM 18823 / ISDg) (Clostridium phytofermentans).